The chain runs to 1893 residues: Endoribonuclease Dicer (1893 aa).

The Helicase ATP-binding domain maps to 41–217; sequence LLEAALDHNT…DLEEKIQKLE (177 aa). 54–61 contacts ATP; that stretch reads LNSGSGKT. The DECH box signature appears at 165 to 168; it reads DECH. A disordered region spans residues 400–424; sequence VSWSDSEDDDDEDEEIEEKEKTETS. Positions 404–416 are enriched in acidic residues; the sequence is DSEDDDDEDEEIE. Residues 424–593 form the Helicase C-terminal domain; that stretch reads SFPSPFTNIL…SIDCGNTESE (170 aa). One can recognise a Dicer dsRNA-binding fold domain in the interval 621–713; sequence AIGHINRYCA…MPVGKETVKY (93 aa). The interval 718–737 is disordered; that stretch reads DLHDEEETSVPGRPGSTKRR. The PAZ domain occupies 886–1036; the sequence is KFVEDIEKSE…LVPELCAIHP (151 aa). 2 consecutive RNase III domains span residues 1249–1380 and 1637–1795; these read TSDM…ETSG and FENF…MDSG. Residues glutamate 1293, aspartate 1371, glutamate 1374, glutamate 1676, aspartate 1781, and glutamate 1784 each contribute to the Mg(2+) site. A DRBM domain is found at 1820-1885; that stretch reads VPRSPVRELL…ARRALRSLKA (66 aa).

Belongs to the helicase family. Dicer subfamily. As to quaternary structure, component of the RISC loading complex (RLC), or micro-RNA (miRNA) loading complex (miRLC), which is composed of dicer1, ago2 and tarbp2; dicer1 and tarbp2 are required to process precursor miRNAs (pre-miRNAs) to mature miRNAs and then load them onto ago2. Note that the trimeric RLC/miRLC is also referred to as RISC. The cofactor is Mg(2+). Mn(2+) is required as a cofactor.

The protein localises to the cytoplasm. The enzyme catalyses Endonucleolytic cleavage to 5'-phosphomonoester.. Functionally, double-stranded RNA (dsRNA) endoribonuclease playing a central role in short dsRNA-mediated post-transcriptional gene silencing. Cleaves naturally occurring long dsRNAs and short hairpin pre-microRNAs (miRNA) into fragments of twenty-one to twenty-three nucleotides with 3' overhang of two nucleotides, producing respectively short interfering RNAs (siRNA) and mature microRNAs. SiRNAs and miRNAs serve as guide to direct the RNA-induced silencing complex (RISC) to complementary RNAs to degrade them or prevent their translation. Gene silencing mediated by siRNAs, also called RNA interference, controls the elimination of transcripts from mobile and repetitive DNA elements of the genome but also the degradation of exogenous RNA of viral origin for instance. The miRNA pathway on the other side is a mean to specifically regulate the expression of target genes. The protein is Endoribonuclease Dicer (dicer1) of Xenopus tropicalis (Western clawed frog).